Consider the following 410-residue polypeptide: Multifunctional CCA protein (410 aa).

The ATP site is built by Gly-8 and Arg-11. Positions 8 and 11 each coordinate CTP. Positions 21 and 23 each coordinate Mg(2+). The ATP site is built by Arg-91, Arg-143, and Arg-146. Positions 91, 143, and 146 each coordinate CTP. An HD domain is found at 232-333 (TGVHVMMVVD…VRLLERSDAI (102 aa)).

It belongs to the tRNA nucleotidyltransferase/poly(A) polymerase family. Bacterial CCA-adding enzyme type 1 subfamily. As to quaternary structure, monomer. Can also form homodimers and oligomers. Requires Mg(2+) as cofactor. The cofactor is Ni(2+).

The catalysed reaction is a tRNA precursor + 2 CTP + ATP = a tRNA with a 3' CCA end + 3 diphosphate. The enzyme catalyses a tRNA with a 3' CCA end + 2 CTP + ATP = a tRNA with a 3' CCACCA end + 3 diphosphate. In terms of biological role, catalyzes the addition and repair of the essential 3'-terminal CCA sequence in tRNAs without using a nucleic acid template. Adds these three nucleotides in the order of C, C, and A to the tRNA nucleotide-73, using CTP and ATP as substrates and producing inorganic pyrophosphate. tRNA 3'-terminal CCA addition is required both for tRNA processing and repair. Also involved in tRNA surveillance by mediating tandem CCA addition to generate a CCACCA at the 3' terminus of unstable tRNAs. While stable tRNAs receive only 3'-terminal CCA, unstable tRNAs are marked with CCACCA and rapidly degraded. This is Multifunctional CCA protein from Paraburkholderia phytofirmans (strain DSM 17436 / LMG 22146 / PsJN) (Burkholderia phytofirmans).